The primary structure comprises 314 residues: Trihelix transcription factor ASR3 (314 aa).

The segment at 1–34 is disordered; that stretch reads MALEQLGLGVSAVDGGENSSAPSNDGGDDGVKTA. The Myb-like domain occupies 38–104; sequence RWTRQEILVL…QCRKRWSNLA (67 aa). A Nuclear localization signal motif is present at residues 84–91; it reads CKRHGVNR. An EAR 1 motif is present at residues 161-165; sequence LSLGL. The residue at position 189 (Thr189) is a Phosphothreonine; by MAPK4. Residues 207 to 255 are disordered; that stretch reads CVADQGRVKEKQPEAANVEGGSTSQEERKRKRTSFGEKEEEEEEGETKK. The EAR 2 signature appears at 280 to 284; sequence LNLKL.

Homodimer. Interacts directly with MPK4. In terms of processing, phosphorylated on Thr-189 by MPK4 in response to microbe-associated molecular patterns (MAMPs, e.g. flg22, elf18, chitin, and LPS). This phosphorylation enhances DNA-binding and thus negatively regulates immune gene expression.

It is found in the nucleus. In terms of biological role, transcriptional repressor that binds DNA and plays a negative role in regulating microbe-associated molecular patterns-(MAMPs, e.g. flg22, elf18, chitin, and LPS) triggered immunity (PTI) by negatively regulating immune gene expression. The chain is Trihelix transcription factor ASR3 from Arabidopsis thaliana (Mouse-ear cress).